Reading from the N-terminus, the 336-residue chain is MAKVYYEKDVTVNVLKEKKVAIIGYGSQGHAHAQNLRDNGFDVVVGLRKGKSWDKAKEDGFSVYTVAEAAKKADVVMILLPDELQPEVYEAEIAPNLQAGNSLVFAHGFNVHFDQVKPPVNVDVFLVAPKGPGHLVRRTFVEGGAVPALFAVYQDATGVATEKALSYADGIGATRAGVLETTFKEETETDLFGEQAVLCGGVTALVKAGFETLVDAGYQPELAYFECLHELKLIVDLMYEGGLENMRYSVSDTAQWGDFVSGPRVVTEDTKKAMDTVLAEIQDGTFARGWIAEHKAGRPNFHATNEKENEHEIEVVGRKLREMMPFVQPRVKAGVK.

The KARI N-terminal Rossmann domain maps to 2–181; the sequence is AKVYYEKDVT…GATRAGVLET (180 aa). NADP(+) contacts are provided by residues 25-28, R48, S52, and 82-85; these read YGSQ and DELQ. Residue H107 is part of the active site. Residue G133 participates in NADP(+) binding. A KARI C-terminal knotted domain is found at 182–327; sequence TFKEETETDL…RKLREMMPFV (146 aa). The Mg(2+) site is built by D190, E194, E226, and E230. A substrate-binding site is contributed by S251.

It belongs to the ketol-acid reductoisomerase family. Mg(2+) is required as a cofactor.

It carries out the reaction (2R)-2,3-dihydroxy-3-methylbutanoate + NADP(+) = (2S)-2-acetolactate + NADPH + H(+). The enzyme catalyses (2R,3R)-2,3-dihydroxy-3-methylpentanoate + NADP(+) = (S)-2-ethyl-2-hydroxy-3-oxobutanoate + NADPH + H(+). Its pathway is amino-acid biosynthesis; L-isoleucine biosynthesis; L-isoleucine from 2-oxobutanoate: step 2/4. The protein operates within amino-acid biosynthesis; L-valine biosynthesis; L-valine from pyruvate: step 2/4. In terms of biological role, involved in the biosynthesis of branched-chain amino acids (BCAA). Catalyzes an alkyl-migration followed by a ketol-acid reduction of (S)-2-acetolactate (S2AL) to yield (R)-2,3-dihydroxy-isovalerate. In the isomerase reaction, S2AL is rearranged via a Mg-dependent methyl migration to produce 3-hydroxy-3-methyl-2-ketobutyrate (HMKB). In the reductase reaction, this 2-ketoacid undergoes a metal-dependent reduction by NADPH to yield (R)-2,3-dihydroxy-isovalerate. The chain is Ketol-acid reductoisomerase (NADP(+)) 1 from Bacillus thuringiensis subsp. konkukian (strain 97-27).